Consider the following 472-residue polypeptide: Proline--tRNA ligase (472 aa).

This sequence belongs to the class-II aminoacyl-tRNA synthetase family. ProS type 3 subfamily. As to quaternary structure, homodimer.

The protein localises to the cytoplasm. The catalysed reaction is tRNA(Pro) + L-proline + ATP = L-prolyl-tRNA(Pro) + AMP + diphosphate. In terms of biological role, catalyzes the attachment of proline to tRNA(Pro) in a two-step reaction: proline is first activated by ATP to form Pro-AMP and then transferred to the acceptor end of tRNA(Pro). The protein is Proline--tRNA ligase of Ureaplasma urealyticum serovar 10 (strain ATCC 33699 / Western).